Here is a 417-residue protein sequence, read N- to C-terminus: Neuropeptide FF receptor 2 (417 aa).

Topologically, residues 1–45 (MSEKWDSNSSESWNHIWSGNDTQHHWYSDINITYVNYYLHQPQVA) are extracellular. Asn8, Asn20, and Asn31 each carry an N-linked (GlcNAc...) asparagine glycan. Residues 46 to 66 (AVFISSYLLIFVLCMVGNTVV) traverse the membrane as a helical segment. At 67-82 (CFIVIRNRHMHTVTNF) the chain is on the cytoplasmic side. Residues 83-103 (FILNLAISDLLVGIFCMPITL) form a helical membrane-spanning segment. At 104–119 (LDNIIAGWPFGSSMCK) the chain is on the extracellular side. A disulfide bridge links Cys118 with Cys206. The chain crosses the membrane as a helical span at residues 120 to 140 (ISGLVQGISVAASVFTLVAIA). At 141–160 (VDRFRCVVYPFKPKLTVKTA) the chain is on the cytoplasmic side. The chain crosses the membrane as a helical span at residues 161–181 (FVTIVIIWGLAIAIMTPSAIM). Over 182–217 (LHVQEEKYYRVRLSSHNKTSTVYWCREDWPRHEMRR) the chain is Extracellular. An N-linked (GlcNAc...) asparagine glycan is attached at Asn198. The helical transmembrane segment at 218 to 238 (IYTTVLFATIYLAPLSLIVIM) threads the bilayer. Topologically, residues 239–274 (YARIGASLFKTAAHCTGKQRPVQWHVSKKKQKVIKM) are cytoplasmic. A helical membrane pass occupies residues 275–295 (LLTVALLFILSWLPLWTLMML). Over 296-310 (SDYTDLSPNKLRIIN) the chain is Extracellular. A helical transmembrane segment spans residues 311 to 331 (IYIYPFAHWLAFCNSSVNPII). At 332-417 (YGFFNENFRN…MGEATNSTVA (86 aa)) the chain is on the cytoplasmic side. Positions 382 to 401 (SQNPGGENLGCGKSADNPTQ) are disordered.

It belongs to the G-protein coupled receptor 1 family.

The protein resides in the cell membrane. Functionally, receptor for NPAF (A-18-F-amide) and NPFF (F-8-F-amide) neuropeptides, also known as morphine-modulating peptides. Can also be activated by a variety of naturally occurring or synthetic FMRF-amide like ligands. This receptor mediates its action by association with G proteins that activate a phosphatidylinositol-calcium second messenger system. This chain is Neuropeptide FF receptor 2 (Npffr2), found in Mus musculus (Mouse).